The following is a 294-amino-acid chain: Single-stranded nucleic acid-binding protein (294 aa).

Positions 1 to 30 (MSAEIEEATNAVNNLSINDSEQQPRAPTHK) are disordered. Residue S2 is modified to N-acetylserine. 2 positions are modified to phosphoserine: S2 and S16. The span at 10-25 (NAVNNLSINDSEQQPR) shows a compositional bias: polar residues. Positions 37–119 (DTIFIGNVAH…REIHIKRART (83 aa)) constitute an RRM 1 domain. The residue at position 49 (T49) is a Phosphothreonine. S66 is modified (phosphoserine). Phosphothreonine occurs at positions 91 and 119. R125 carries the post-translational modification Omega-N-methylarginine. An RNA-binding RGG-box region spans residues 131 to 151 (RGGFRGRGGFRGGFRGGYRGG). R135, R137, and R141 each carry dimethylated arginine. Residue R145 is modified to Dimethylated arginine; alternate. Residue R145 is modified to Omega-N-methylarginine; alternate. R149 bears the Omega-N-methylarginine mark. The span at 151–169 (GFRGRGNFRGRGGARGGFN) shows a compositional bias: gly residues. The tract at residues 151-171 (GFRGRGNFRGRGGARGGFNGQ) is disordered. Dimethylated arginine occurs at positions 153, 155, and 159. R161 and R165 each carry dimethylated arginine; alternate. Omega-N-methylarginine; alternate is present on residues R161 and R165. Positions 186–274 (DTLYINNVPF…RELTVDVAVI (89 aa)) constitute an RRM 2 domain. T242 carries the post-translational modification Phosphothreonine. S244 carries the phosphoserine modification. Positions 275–294 (RPENDEEEIEQETGSEEKQE) are disordered. Acidic residues predominate over residues 278-288 (NDEEEIEQETG). Position 287 is a phosphothreonine (T287). Position 289 is a phosphoserine (S289).

Belongs to the RRM GAR family. As to quaternary structure, associated with snR10 and snR11 small nuclear RNAs.

The protein resides in the cytoplasm. It is found in the nucleus. The protein localises to the nucleolus. Its subcellular location is the P-body. It localises to the stress granule. Functions in the transition of mRNAs from translation to an mRNP complex destined for decapping. High-copy-number suppressor of decapping defects. Overexpression suppresses decapping defects in both DCP1-2 and DCP2-7 mutations. Acts to promote translational repression of mRNA in conjunction with DHH1 and subsequent mRNA localization to P bodies. Promotes translational repression of mRNA during glucose deprivation. The protein is Single-stranded nucleic acid-binding protein (SBP1) of Saccharomyces cerevisiae (strain ATCC 204508 / S288c) (Baker's yeast).